A 579-amino-acid polypeptide reads, in one-letter code: Glutamate--tRNA ligase (579 aa).

Residues P114–H124 carry the 'HIGH' region motif.

The protein belongs to the class-I aminoacyl-tRNA synthetase family. Glutamate--tRNA ligase type 2 subfamily.

The protein resides in the cytoplasm. It catalyses the reaction tRNA(Glu) + L-glutamate + ATP = L-glutamyl-tRNA(Glu) + AMP + diphosphate. In terms of biological role, catalyzes the attachment of glutamate to tRNA(Glu) in a two-step reaction: glutamate is first activated by ATP to form Glu-AMP and then transferred to the acceptor end of tRNA(Glu). The chain is Glutamate--tRNA ligase from Haloarcula marismortui (strain ATCC 43049 / DSM 3752 / JCM 8966 / VKM B-1809) (Halobacterium marismortui).